Here is a 148-residue protein sequence, read N- to C-terminus: NADPH-dependent 7-cyano-7-deazaguanine reductase (148 aa).

Residue cysteine 50 is the Thioimide intermediate of the active site. Aspartate 57 functions as the Proton donor in the catalytic mechanism. Residues 72-74 (VES) and 91-92 (HE) each bind substrate.

The protein belongs to the GTP cyclohydrolase I family. QueF type 1 subfamily.

Its subcellular location is the cytoplasm. It carries out the reaction 7-aminomethyl-7-carbaguanine + 2 NADP(+) = 7-cyano-7-deazaguanine + 2 NADPH + 3 H(+). The protein operates within tRNA modification; tRNA-queuosine biosynthesis. In terms of biological role, catalyzes the NADPH-dependent reduction of 7-cyano-7-deazaguanine (preQ0) to 7-aminomethyl-7-deazaguanine (preQ1). The sequence is that of NADPH-dependent 7-cyano-7-deazaguanine reductase from Helicobacter pylori (strain J99 / ATCC 700824) (Campylobacter pylori J99).